The chain runs to 353 residues: DNA-directed RNA polymerase subunit alpha (353 aa).

The alpha N-terminal domain (alpha-NTD) stretch occupies residues 1–234 (MVQEKVRVST…DLFIPFLHTE (234 aa)). The interval 266 to 353 (KKIALKSIFI…LAQSIYSESG (88 aa)) is alpha C-terminal domain (alpha-CTD).

Belongs to the RNA polymerase alpha chain family. In terms of assembly, in plastids the minimal PEP RNA polymerase catalytic core is composed of four subunits: alpha, beta, beta', and beta''. When a (nuclear-encoded) sigma factor is associated with the core the holoenzyme is formed, which can initiate transcription.

It localises to the plastid. The protein resides in the chloroplast. The catalysed reaction is RNA(n) + a ribonucleoside 5'-triphosphate = RNA(n+1) + diphosphate. Its function is as follows. DNA-dependent RNA polymerase catalyzes the transcription of DNA into RNA using the four ribonucleoside triphosphates as substrates. In Panax ginseng (Korean ginseng), this protein is DNA-directed RNA polymerase subunit alpha.